The following is a 129-amino-acid chain: Copper chaperone GriE (129 aa).

The segment at residues 1 to 37 is a signal peptide (tat-type signal); sequence MPMNRREMVMATTGAALAAAAAVPLLSGGEGEGAAEA. Residues 32-51 form a disordered region; it reads EGAAEAAAAPAKATGRGREH. Low complexity predominate over residues 34–45; that stretch reads AAEAAAAPAKAT.

Belongs to the melC1 family. In terms of processing, predicted to be exported by the Tat system. The position of the signal peptide cleavage has not been experimentally proven.

Involved in the transfer of Cu(2+) ions to the apo form of o-aminophenol oxidase GriF in the grixazone biosynthetic pathway. This is Copper chaperone GriE (griE) from Streptomyces griseus subsp. griseus (strain JCM 4626 / CBS 651.72 / NBRC 13350 / KCC S-0626 / ISP 5235).